The following is a 642-amino-acid chain: LIM domain kinase 2 (642 aa).

LIM zinc-binding domains lie at 12-63 and 72-124; these read CLGC…CHKD and CHGC…CGKC. A PDZ domain is found at 152 to 239; it reads LISMPAATDG…TLQLLIEHDP (88 aa). A disordered region spans residues 282–304; it reads RSLRRSNSISKSPGPSSPKEPLL. Over residues 286–304 the composition is skewed to low complexity; the sequence is RSNSISKSPGPSSPKEPLL. The region spanning 331–608 is the Protein kinase domain; it reads LIHGEVLGKG…DSFEALSLYL (278 aa). ATP-binding positions include 337–345 and lysine 360; that span reads LGKGFFGQA. Aspartate 451 is a catalytic residue. Position 505 is a phosphothreonine (threonine 505).

It belongs to the protein kinase superfamily. TKL Ser/Thr protein kinase family. In terms of assembly, binds ROCK1 and LKAP. As to expression, expressed predominantly in the lung, and faintly in the kidney, liver, brain, spleen, gizzard, and intestine.

It localises to the cytoplasm. It is found in the cytoskeleton. The protein resides in the spindle. Its subcellular location is the microtubule organizing center. The protein localises to the centrosome. It carries out the reaction L-seryl-[protein] + ATP = O-phospho-L-seryl-[protein] + ADP + H(+). It catalyses the reaction L-threonyl-[protein] + ATP = O-phospho-L-threonyl-[protein] + ADP + H(+). Serine/threonine-protein kinase that plays an essential role in the regulation of actin filament dynamics. Acts downstream of several Rho family GTPase signal transduction pathways. Involved in astral microtubule organization and mitotic spindle orientation during early stages of mitosis by mediating phosphorylation of TPPP. The protein is LIM domain kinase 2 (LIMK2) of Gallus gallus (Chicken).